Here is a 166-residue protein sequence, read N- to C-terminus: Regulatory protein RecX (166 aa).

The protein belongs to the RecX family.

It localises to the cytoplasm. Its function is as follows. Modulates RecA activity. The sequence is that of Regulatory protein RecX from Klebsiella pneumoniae subsp. pneumoniae (strain ATCC 700721 / MGH 78578).